Consider the following 101-residue polypeptide: MAKQSMIARDVKRAKLADKFYEKREELKKVISDVNTSDEERWAAVLKLQTLPRDSSPVRQRNRCRQTGRPHGVLRKFGLSRIKVREAAMRGEIPGLKKASW.

It belongs to the universal ribosomal protein uS14 family. Part of the 30S ribosomal subunit. Contacts proteins S3 and S10.

Functionally, binds 16S rRNA, required for the assembly of 30S particles and may also be responsible for determining the conformation of the 16S rRNA at the A site. The protein is Small ribosomal subunit protein uS14 of Histophilus somni (strain 2336) (Haemophilus somnus).